A 67-amino-acid chain; its full sequence is SPbeta prophage-derived uncharacterized protein YopZ (67 aa).

Positions 1–40 form a coiled coil; that stretch reads MTSEMQLQAQIDVIEKENKELRRRNEELGQTVECQNKQIV. The chain crosses the membrane as a helical span at residues 44–66; the sequence is WRLLFFASSWIVYGIVSAIKYLW.

It localises to the cell membrane. This Bacillus subtilis (strain 168) protein is SPbeta prophage-derived uncharacterized protein YopZ (yopZ).